We begin with the raw amino-acid sequence, 38 residues long: Putative defensin-like protein 105 (38 aa).

3 disulfide bridges follow: Cys5–Cys27, Cys13–Cys33, and Cys17–Cys34.

This sequence belongs to the DEFL family.

The protein is Putative defensin-like protein 105 of Arabidopsis thaliana (Mouse-ear cress).